The primary structure comprises 1044 residues: Integrin alpha-8 (1044 aa).

Residues 1–23 (MPRRQPPRPLLLLSALLCAPASA) form the signal peptide. At 24–991 (FNLDEEKLTV…WSTPNVSFVI (968 aa)) the chain is on the extracellular side. FG-GAP repeat units follow at residues 28 to 90 (EEKL…RCRQ), 104 to 165 (NGTR…AYAE), 170 to 222 (RNSN…ITNY), 236 to 288 (QTGV…SSDL), 289 to 354 (TFIQ…FLFR), 355 to 413 (DPQI…GLKT), and 417 to 480 (QVLN…LNPM). The N-linked (GlcNAc...) asparagine glycan is linked to asparagine 66. An intrachain disulfide couples cysteine 81 to cysteine 88. Residue asparagine 104 is glycosylated (N-linked (GlcNAc...) asparagine). A disulfide bond links cysteine 132 and cysteine 153. Asparagine 159 is a glycosylation site (N-linked (GlcNAc...) asparagine). Cysteines 169 and 182 form a disulfide. An N-linked (GlcNAc...) asparagine glycan is attached at asparagine 221. 4 residues coordinate Ca(2+): glutamate 257, threonine 259, aspartate 261, and glutamate 265. N-linked (GlcNAc...) asparagine glycosylation is found at asparagine 284 and asparagine 293. Residues aspartate 311, asparagine 313, aspartate 315, leucine 317, aspartate 319, aspartate 377, asparagine 379, aspartate 381, tyrosine 383, and aspartate 385 each coordinate Ca(2+). The Cell attachment site motif lies at 437 to 439 (RGD). Residues aspartate 441, aspartate 443, asparagine 445, tyrosine 447, and aspartate 449 each contribute to the Ca(2+) site. An N-linked (GlcNAc...) asparagine glycan is attached at asparagine 486. 2 cysteine pairs are disulfide-bonded: cysteine 489–cysteine 500 and cysteine 506–cysteine 562. A glycan (N-linked (GlcNAc...) asparagine) is linked at asparagine 587. 2 disulfides stabilise this stretch: cysteine 623–cysteine 629 and cysteine 695–cysteine 708. Residues asparagine 701, asparagine 719, asparagine 751, asparagine 762, asparagine 818, asparagine 877, and asparagine 904 are each glycosylated (N-linked (GlcNAc...) asparagine). 2 disulfide bridges follow: cysteine 849–cysteine 905 and cysteine 910–cysteine 915. Asparagine 952 and asparagine 986 each carry an N-linked (GlcNAc...) asparagine glycan. A helical transmembrane segment spans residues 992–1015 (PLWVIILAIMLGLLVLAVLTLALW). At 1016–1044 (KCGFFDRARPPQDDMADREQLTNNKTTDA) the chain is on the cytoplasmic side.

Belongs to the integrin alpha chain family. In terms of assembly, heterodimer of an alpha and a beta subunit. The alpha subunit is composed of a heavy and a light chain linked by a disulfide bond. Alpha-8 associates with beta-1. Prominently expressed on axons and on cells in contact with basal laminae in embryos.

The protein resides in the membrane. Its subcellular location is the cell membrane. Functionally, integrin alpha-8/beta-1 functions in the genesis of kidney and probably of other organs by regulating the recruitment of mesenchymal cells into epithelial structures. It recognizes the sequence R-G-D in a wide array of ligands including TNC, FN1, SPP1, TGFB1, TGFB3 and VTN. NPNT is probably its functional ligand in kidney genesis. Neuronal receptor for TNC it mediates cell-cell interactions and regulates neurite outgrowth of sensory and motor neurons. In Gallus gallus (Chicken), this protein is Integrin alpha-8 (ITGA8).